The sequence spans 586 residues: Beta-fructofuranosidase, insoluble isoenzyme 3 (586 aa).

Positions methionine 1–alanine 26 are cleaved as a signal peptide. Aspartate 61 is an active-site residue. Residues asparagine 154, asparagine 179, asparagine 341, asparagine 390, and asparagine 479 are each glycosylated (N-linked (GlcNAc...) asparagine).

The protein belongs to the glycosyl hydrolase 32 family.

It is found in the secreted. Its subcellular location is the extracellular space. The protein resides in the apoplast. It localises to the cell wall. The catalysed reaction is Hydrolysis of terminal non-reducing beta-D-fructofuranoside residues in beta-D-fructofuranosides.. This is Beta-fructofuranosidase, insoluble isoenzyme 3 (CIN3) from Oryza sativa subsp. indica (Rice).